A 53-amino-acid polypeptide reads, in one-letter code: Large ribosomal subunit protein uL30 (53 aa).

Belongs to the universal ribosomal protein uL30 family. Part of the 50S ribosomal subunit.

The protein is Large ribosomal subunit protein uL30 of Deinococcus geothermalis (strain DSM 11300 / CIP 105573 / AG-3a).